Consider the following 404-residue polypeptide: Cysteine desulfurase IscS (404 aa).

Residues 75–76 (AT), asparagine 155, glutamine 183, and 203–205 (SAH) contribute to the pyridoxal 5'-phosphate site. Lysine 206 bears the N6-(pyridoxal phosphate)lysine mark. Threonine 243 lines the pyridoxal 5'-phosphate pocket. The Cysteine persulfide intermediate role is filled by cysteine 328. [2Fe-2S] cluster is bound at residue cysteine 328.

It belongs to the class-V pyridoxal-phosphate-dependent aminotransferase family. NifS/IscS subfamily. Homodimer. Forms a heterotetramer with IscU, interacts with other sulfur acceptors. It depends on pyridoxal 5'-phosphate as a cofactor.

The protein localises to the cytoplasm. The catalysed reaction is (sulfur carrier)-H + L-cysteine = (sulfur carrier)-SH + L-alanine. It functions in the pathway cofactor biosynthesis; iron-sulfur cluster biosynthesis. In terms of biological role, master enzyme that delivers sulfur to a number of partners involved in Fe-S cluster assembly, tRNA modification or cofactor biosynthesis. Catalyzes the removal of elemental sulfur atoms from cysteine to produce alanine. Functions as a sulfur delivery protein for Fe-S cluster synthesis onto IscU, an Fe-S scaffold assembly protein, as well as other S acceptor proteins. The chain is Cysteine desulfurase IscS from Pseudomonas aeruginosa (strain LESB58).